Here is a 225-residue protein sequence, read N- to C-terminus: Uridylate kinase (225 aa).

9-10 contacts ATP; sequence GS. Gly43 is a UMP binding site. 2 residues coordinate ATP: Gly44 and Arg48. Residues Asp65 and 113-119 contribute to the UMP site; that span reads TEPAHST. The ATP site is built by Thr139, Tyr145, and Asp148.

Belongs to the UMP kinase family. As to quaternary structure, homohexamer.

The protein localises to the cytoplasm. The catalysed reaction is UMP + ATP = UDP + ADP. It participates in pyrimidine metabolism; CTP biosynthesis via de novo pathway; UDP from UMP (UMPK route): step 1/1. Inhibited by UTP. Catalyzes the reversible phosphorylation of UMP to UDP. The sequence is that of Uridylate kinase from Methanobrevibacter smithii (strain ATCC 35061 / DSM 861 / OCM 144 / PS).